A 960-amino-acid polypeptide reads, in one-letter code: UPF0182 protein DSY1630 (960 aa).

The next 7 membrane-spanning stretches (helical) occupy residues 7 to 27 (IMLV…GLFE), 50 to 70 (IIQI…LFSI), 105 to 125 (TLWL…VTGF), 169 to 189 (FGPL…AGVI), 212 to 232 (LALL…FDTF), 256 to 276 (ALKA…LAFF), and 285 to 305 (LPIL…PMVL). Disordered regions lie at residues 866-899 (SALA…QEDT) and 924-960 (TGDS…KTNP). The segment covering 881–897 (ETEETTEETEEPVDPQE) has biased composition (acidic residues). The segment covering 931–944 (EGGKKADEDAHDVQ) has biased composition (basic and acidic residues). Polar residues predominate over residues 950–960 (SVSSEQSKTNP).

This sequence belongs to the UPF0182 family.

It is found in the cell membrane. The polypeptide is UPF0182 protein DSY1630 (Desulfitobacterium hafniense (strain Y51)).